Consider the following 962-residue polypeptide: UvrABC system protein A (962 aa).

Residue 38 to 45 (GISGSGKS) coordinates ATP. ABC transporter domains follow at residues 319-597 (WSKS…PDSL) and 617-944 (PSGR…RFLR). An ATP-binding site is contributed by 649–656 (GVSGSGKS). A C4-type zinc finger spans residues 748–774 (CEACGGDGIIKIEMHFLADVYVPCEVC).

The protein belongs to the ABC transporter superfamily. UvrA family. Forms a heterotetramer with UvrB during the search for lesions.

It localises to the cytoplasm. In terms of biological role, the UvrABC repair system catalyzes the recognition and processing of DNA lesions. UvrA is an ATPase and a DNA-binding protein. A damage recognition complex composed of 2 UvrA and 2 UvrB subunits scans DNA for abnormalities. When the presence of a lesion has been verified by UvrB, the UvrA molecules dissociate. The sequence is that of UvrABC system protein A from Methanothermobacter thermautotrophicus (strain ATCC 29096 / DSM 1053 / JCM 10044 / NBRC 100330 / Delta H) (Methanobacterium thermoautotrophicum).